The chain runs to 435 residues: UDP-N-acetylmuramoylalanine--D-glutamate ligase (435 aa).

114-120 (GSNGKST) contributes to the ATP binding site.

The protein belongs to the MurCDEF family.

The protein localises to the cytoplasm. The catalysed reaction is UDP-N-acetyl-alpha-D-muramoyl-L-alanine + D-glutamate + ATP = UDP-N-acetyl-alpha-D-muramoyl-L-alanyl-D-glutamate + ADP + phosphate + H(+). Its pathway is cell wall biogenesis; peptidoglycan biosynthesis. Cell wall formation. Catalyzes the addition of glutamate to the nucleotide precursor UDP-N-acetylmuramoyl-L-alanine (UMA). This is UDP-N-acetylmuramoylalanine--D-glutamate ligase from Haemophilus ducreyi (strain 35000HP / ATCC 700724).